Reading from the N-terminus, the 431-residue chain is Serine--tRNA ligase (431 aa).

238–240 (TAE) serves as a coordination point for L-serine. 269–271 (RSE) is an ATP binding site. An L-serine-binding site is contributed by E292. Residue 356–359 (EISS) participates in ATP binding. S391 lines the L-serine pocket.

It belongs to the class-II aminoacyl-tRNA synthetase family. Type-1 seryl-tRNA synthetase subfamily. Homodimer. The tRNA molecule binds across the dimer.

It is found in the cytoplasm. It carries out the reaction tRNA(Ser) + L-serine + ATP = L-seryl-tRNA(Ser) + AMP + diphosphate + H(+). It catalyses the reaction tRNA(Sec) + L-serine + ATP = L-seryl-tRNA(Sec) + AMP + diphosphate + H(+). It participates in aminoacyl-tRNA biosynthesis; selenocysteinyl-tRNA(Sec) biosynthesis; L-seryl-tRNA(Sec) from L-serine and tRNA(Sec): step 1/1. Functionally, catalyzes the attachment of serine to tRNA(Ser). Is also able to aminoacylate tRNA(Sec) with serine, to form the misacylated tRNA L-seryl-tRNA(Sec), which will be further converted into selenocysteinyl-tRNA(Sec). The sequence is that of Serine--tRNA ligase from Bdellovibrio bacteriovorus (strain ATCC 15356 / DSM 50701 / NCIMB 9529 / HD100).